Here is a 141-residue protein sequence, read N- to C-terminus: Large ribosomal subunit protein uL11 (141 aa).

Belongs to the universal ribosomal protein uL11 family. As to quaternary structure, part of the ribosomal stalk of the 50S ribosomal subunit. Interacts with L10 and the large rRNA to form the base of the stalk. L10 forms an elongated spine to which L12 dimers bind in a sequential fashion forming a multimeric L10(L12)X complex. Post-translationally, one or more lysine residues are methylated.

Forms part of the ribosomal stalk which helps the ribosome interact with GTP-bound translation factors. This is Large ribosomal subunit protein uL11 from Bacillus cereus (strain ATCC 10987 / NRS 248).